The chain runs to 54 residues: UPF0235 protein in proC 3'region (54 aa).

Belongs to the UPF0235 family.

The sequence is that of UPF0235 protein in proC 3'region from Vibrio alginolyticus.